The chain runs to 379 residues: Probable pectin lyase A (379 aa).

The first 20 residues, 1–20 (MKYSTIFSAAAAVFAGSAAA), serve as a signal peptide directing secretion. Intrachain disulfides connect C83–C102 and C92–C226. N129 carries N-linked (GlcNAc...) asparagine glycosylation. R256 is a catalytic residue. C322 and C330 are disulfide-bonded.

Belongs to the polysaccharide lyase 1 family.

Its subcellular location is the secreted. It catalyses the reaction Eliminative cleavage of (1-&gt;4)-alpha-D-galacturonan methyl ester to give oligosaccharides with 4-deoxy-6-O-methyl-alpha-D-galact-4-enuronosyl groups at their non-reducing ends.. Functionally, pectinolytic enzymes consist of four classes of enzymes: pectin lyase, polygalacturonase, pectin methylesterase and rhamnogalacturonase. Among pectinolytic enzymes, pectin lyase is the most important in depolymerization of pectin, since it cleaves internal glycosidic bonds of highly methylated pectins. The protein is Probable pectin lyase A (pelA) of Aspergillus niger (strain ATCC MYA-4892 / CBS 513.88 / FGSC A1513).